We begin with the raw amino-acid sequence, 295 residues long: Putative aquaporin-12A (295 aa).

Residues 1-21 (MAGLNVSLSFFFATFALCEAA) form a helical membrane-spanning segment. Residues 22–54 (RRASKALLPVGAYEVFAREAMRTLVELGPWAGD) are Extracellular-facing. A helical membrane pass occupies residues 55–75 (FGPDLLLTLLFLLFLAHGVTL). The Cytoplasmic segment spans residues 76 to 99 (DGASANPTVSLQEFLMAEQSLPGT). Positions 77-114 (GASANPTVSLQEFLMAEQSLPGTLLKLAAQGLGMQAAC) form an intramembrane region, discontinuously helical. Residues 81–83 (NPT) carry the NPA 1 motif. The helical transmembrane segment at 100 to 126 (LLKLAAQGLGMQAACTLMRLCWAWELS) threads the bilayer. The Extracellular portion of the chain corresponds to 127 to 145 (DLHLLQSLMAQSCSSALRT). Residues 146–166 (SVPHGALVEAACAFCFHLTLL) traverse the membrane as a helical segment. At 167 to 178 (HLRHSPPAYSGP) the chain is on the cytoplasmic side. The helical transmembrane segment at 179 to 199 (AVALLVTVTAYTAGPFTSAFF) threads the bilayer. Residues 195–206 (TSAFFNPALAAS) constitute an intramembrane region (discontinuously helical). The NPA 2 signature appears at 200–202 (NPA). At 200–215 (NPALAASVTFACSGHT) the chain is on the extracellular side. A helical transmembrane segment spans residues 216–236 (LLEYVQVYWLGPLTGMVLAVL). Topologically, residues 237–295 (LHQGRLPHLFQRNLFYGQKNKYRAPRGKPAPASGDTQTPAKGSSVREPGRSGVEGPHSS) are cytoplasmic. Residues 257-295 (KYRAPRGKPAPASGDTQTPAKGSSVREPGRSGVEGPHSS) form a disordered region.

Belongs to the MIP/aquaporin (TC 1.A.8) family. AQP11/AQP12 subfamily. Homotetramer; each monomer provides an independent water pore. In terms of tissue distribution, restricted to the pancreas.

It localises to the membrane. The catalysed reaction is H2O(in) = H2O(out). Its function is as follows. Putative aquaporin. Could form homotetrameric transmembrane channels, with each monomer independently mediating water transport across the plasma membrane along its osmotic gradient. This chain is Putative aquaporin-12A, found in Homo sapiens (Human).